The primary structure comprises 82 residues: MAVFHDEVEIEDFQYDEDSETYFYPCPCGDNFAITKEDLENGEDVATCPSCSLIIKVIYDKDQFMCGETVPAPSTNKELVKC.

In terms of domain architecture, DPH-type MB spans 4–60 (FHDEVEIEDFQYDEDSETYFYPCPCGDNFAITKEDLENGEDVATCPSCSLIIKVIYD). Fe cation contacts are provided by Cys-26, Cys-28, Cys-48, and Cys-51.

Belongs to the DPH3 family. In terms of assembly, component of the 2-(3-amino-3-carboxypropyl)histidine synthase complex composed of DPH1, DPH2, DPH3 and a NADH-dependent reductase. Interacts with SERGEF. Fe(2+) is required as a cofactor. As to expression, widely expressed with highest levels in heart, liver, kidney and testis.

The protein localises to the cytoplasm. Its subcellular location is the nucleus. It carries out the reaction [3Fe-4S](1+)-[protein] + Fe(2+)-[Dph3] = [3Fe-4S](0)-[protein] + Fe(3+)-[Dph3]. It catalyses the reaction 2 [3Fe-4S](0)-[protein] + 2 Fe(2+)-[Dph3] + NADH = 2 [4Fe-4S](1+)-[protein] + 2 [Dph3] + NAD(+) + H(+). It participates in protein modification; peptidyl-diphthamide biosynthesis. Required for the first step of diphthamide biosynthesis, a post-translational modification of histidine which occurs in elongation factor 2. DPH1 and DPH2 transfer a 3-amino-3-carboxypropyl (ACP) group from S-adenosyl-L-methionine (SAM) to a histidine residue, the reaction is assisted by a reduction system comprising DPH3 and a NADH-dependent reductase. Acts as an electron donor to reduce the Fe-S cluster in DPH1-DPH2 keeping the [4Fe-4S] clusters in the active and reduced state. Restores iron to DPH1-DPH2 iron-sulfur clusters which have degraded from [4Fe-4S] to [3Fe-4S] by donating an iron atom to reform [4Fe-4S] clusters, in a manner dependent on the presence of elongation factor 2 and SAM. Associates with the elongator complex and is required for tRNA Wobble base modifications mediated by the elongator complex. The elongator complex is required for multiple tRNA modifications, including mcm5U (5-methoxycarbonylmethyl uridine), mcm5s 2U (5-methoxycarbonylmethyl-2-thiouridine), and ncm5U (5-carbamoylmethyl uridine). The chain is Diphthamide biosynthesis protein 3 from Mus musculus (Mouse).